Here is a 423-residue protein sequence, read N- to C-terminus: G protein-activated inward rectifier potassium channel 2 (423 aa).

At 1–89 (MAKLTESMTN…IFTTLVDLKW (89 aa)) the chain is on the cytoplasmic side. A phosphoserine mark is found at Ser16 and Ser23. Residues 90-114 (RFNLLIFVMVYTVTWLFFGMIWWLI) form a helical membrane-spanning segment. Residues 115–138 (AYIRGDMDHIEDPSWTPCVTNLNG) lie on the Extracellular side of the membrane. Residues 139 to 150 (FVSAFLFSIETE) constitute an intramembrane region (helical; Pore-forming). The segment at residues 151 to 157 (TTIGYGY) is an intramembrane region (pore-forming). A Selectivity filter motif is present at residues 152–157 (TIGYGY). At 158–166 (RVITDKCPE) the chain is on the extracellular side. The chain crosses the membrane as a helical span at residues 167–188 (GIILLLIQSVLGSIVNAFMVGC). At 189-423 (MFVKISQPKK…VANLENESKV (235 aa)) the chain is on the cytoplasmic side. The disordered stretch occupies residues 390 to 423 (NQHAELETEEEEKNLEEQTERNGDVANLENESKV). The PDZ-binding signature appears at 420-423 (ESKV).

It belongs to the inward rectifier-type potassium channel (TC 1.A.2.1) family. KCNJ6 subfamily. In terms of assembly, associates with KCNJ3/GIRK1 or KCNJ5/GRIK4 to form a G-protein-activated heteromultimer pore-forming unit. The resulting inward current is much larger. Interacts (via PDZ-binding motif) with SNX27 (via PDZ domain); the interaction is required when endocytosed to prevent degradation in lysosomes and promote recycling to the plasma membrane. As to expression, most abundant in cerebellum, and to a lesser degree in islets and exocrine pancreas.

The protein resides in the membrane. The catalysed reaction is K(+)(in) = K(+)(out). With respect to regulation, activated by phosphatidylinositol 4,5 biphosphate (PtdIns(4,5)P2). Functionally, inward rectifier potassium channels are characterized by a greater tendency to allow potassium to flow into the cell rather than out of it. Their voltage dependence is regulated by the concentration of extracellular potassium; as external potassium is raised, the voltage range of the channel opening shifts to more positive voltages. The inward rectification is mainly due to the blockage of outward current by internal magnesium. This potassium channel may be involved in the regulation of insulin secretion by glucose and/or neurotransmitters acting through G-protein-coupled receptors. This chain is G protein-activated inward rectifier potassium channel 2 (KCNJ6), found in Homo sapiens (Human).